The sequence spans 298 residues: Acetyl-coenzyme A carboxylase carboxyl transferase subunit beta 1 (298 aa).

The region spanning 26-294 (MWVKCPSCGD…RAADVQNAPA (269 aa)) is the CoA carboxyltransferase N-terminal domain. Cys30, Cys33, Cys49, and Cys51 together coordinate Zn(2+). The segment at 30-51 (CPSCGDLIYTRQFSDNLKVCKC) adopts a C4-type zinc-finger fold.

The protein belongs to the AccD/PCCB family. Acetyl-CoA carboxylase is a heterohexamer composed of biotin carboxyl carrier protein (AccB), biotin carboxylase (AccC) and two subunits each of ACCase subunit alpha (AccA) and ACCase subunit beta (AccD). Requires Zn(2+) as cofactor.

The protein resides in the cytoplasm. The catalysed reaction is N(6)-carboxybiotinyl-L-lysyl-[protein] + acetyl-CoA = N(6)-biotinyl-L-lysyl-[protein] + malonyl-CoA. It participates in lipid metabolism; malonyl-CoA biosynthesis; malonyl-CoA from acetyl-CoA: step 1/1. Component of the acetyl coenzyme A carboxylase (ACC) complex. Biotin carboxylase (BC) catalyzes the carboxylation of biotin on its carrier protein (BCCP) and then the CO(2) group is transferred by the transcarboxylase to acetyl-CoA to form malonyl-CoA. This chain is Acetyl-coenzyme A carboxylase carboxyl transferase subunit beta 1, found in Roseiflexus castenholzii (strain DSM 13941 / HLO8).